We begin with the raw amino-acid sequence, 925 residues long: Bifunctional imidazolonepropionase/histidine ammonia-lyase (925 aa).

The interval 1–414 is imidazolonepropionase; that stretch reads MTKNSSTVFT…IKPHVRMEPF (414 aa). Residues H73 and H75 each contribute to the Fe(3+) site. Zn(2+)-binding residues include H73 and H75. The 4-imidazolone-5-propanoate site is built by R82, Y145, and H178. Residue Y145 participates in N-formimidoyl-L-glutamate binding. H243 provides a ligand contact to Fe(3+). Position 243 (H243) interacts with Zn(2+). Q246 provides a ligand contact to 4-imidazolone-5-propanoate. D318 provides a ligand contact to Fe(3+). D318 contacts Zn(2+). N-formimidoyl-L-glutamate is bound by residues N320 and G322. T323 lines the 4-imidazolone-5-propanoate pocket. Positions 415-925 are histidine ammonia-lyase; sequence MTIILKPGSV…SAGILPDLEA (511 aa). Residues 556–558 constitute a cross-link (5-imidazolinone (Ala-Gly)); that stretch reads ASG. Residue S557 is modified to 2,3-didehydroalanine (Ser).

In the N-terminal section; belongs to the metallo-dependent hydrolases superfamily. HutI family. The protein in the C-terminal section; belongs to the PAL/histidase family. It depends on Zn(2+) as a cofactor. The cofactor is Fe(3+). Contains an active site 4-methylidene-imidazol-5-one (MIO), which is formed autocatalytically by cyclization and dehydration of residues Ala-Ser-Gly.

It is found in the cytoplasm. It catalyses the reaction 4-imidazolone-5-propanoate + H2O = N-formimidoyl-L-glutamate. The enzyme catalyses L-histidine = trans-urocanate + NH4(+). Its pathway is amino-acid degradation; L-histidine degradation into L-glutamate; N-formimidoyl-L-glutamate from L-histidine: step 1/3. It participates in amino-acid degradation; L-histidine degradation into L-glutamate; N-formimidoyl-L-glutamate from L-histidine: step 3/3. Catalyzes the hydrolytic cleavage of the carbon-nitrogen bond in imidazolone-5-propanoate to yield N-formimidoyl-L-glutamate. It is the third step in the universal histidine degradation pathway. This chain is Bifunctional imidazolonepropionase/histidine ammonia-lyase (hutIH), found in Brucella melitensis biotype 1 (strain ATCC 23456 / CCUG 17765 / NCTC 10094 / 16M).